The following is a 356-amino-acid chain: Glutamine synthetase cytosolic isozyme (356 aa).

Residues 19-99 form the GS beta-grasp domain; it reads IIAEYIWIGG…VMCDAYTPAG (81 aa). Residues 38–66 are disordered; the sequence is RTLPGPVTDPSQLPKWNYDGSSTGQAPGE. Residues 106-356 enclose the GS catalytic domain; the sequence is KRHAAAKIFS…IADTTILWKP (251 aa).

This sequence belongs to the glutamine synthetase family. As to quaternary structure, homooctamer.

The protein resides in the cytoplasm. The enzyme catalyses L-glutamate + NH4(+) + ATP = L-glutamine + ADP + phosphate + H(+). The protein is Glutamine synthetase cytosolic isozyme of Medicago sativa (Alfalfa).